The following is a 167-amino-acid chain: SsrA-binding protein (167 aa).

This sequence belongs to the SmpB family.

Its subcellular location is the cytoplasm. Functionally, required for rescue of stalled ribosomes mediated by trans-translation. Binds to transfer-messenger RNA (tmRNA), required for stable association of tmRNA with ribosomes. tmRNA and SmpB together mimic tRNA shape, replacing the anticodon stem-loop with SmpB. tmRNA is encoded by the ssrA gene; the 2 termini fold to resemble tRNA(Ala) and it encodes a 'tag peptide', a short internal open reading frame. During trans-translation Ala-aminoacylated tmRNA acts like a tRNA, entering the A-site of stalled ribosomes, displacing the stalled mRNA. The ribosome then switches to translate the ORF on the tmRNA; the nascent peptide is terminated with the 'tag peptide' encoded by the tmRNA and targeted for degradation. The ribosome is freed to recommence translation, which seems to be the essential function of trans-translation. This chain is SsrA-binding protein, found in Stenotrophomonas maltophilia (strain K279a).